The chain runs to 135 residues: Antennal-specific protein OS-C (135 aa).

Positions 1–27 are cleaved as a signal peptide; sequence MGFHMGRQLLLSGFLLVMLQMVTQTQA. The interval 43-84 is disordered; the sequence is VIKREGDDDGDDDDSSSEETVEDSEESRRRRREVNTDNTPSA. Acidic residues predominate over residues 49–67; it reads DDDGDDDDSSSEETVEDSE.

In terms of tissue distribution, antenna. In the third antennal segment. Expressed in sencilla coeloconica.

The protein is Antennal-specific protein OS-C (Os-C) of Drosophila melanogaster (Fruit fly).